Reading from the N-terminus, the 62-residue chain is Overexpressed in colon carcinoma 1 protein homolog (62 aa).

The segment covering 1 to 16 has biased composition (gly residues); sequence MGCGNSTAGGAGGRGA. Positions 1–62 are disordered; sequence MGCGNSTAGG…SGQTKAAPKD (62 aa).

Belongs to the OCC1 family.

This is Overexpressed in colon carcinoma 1 protein homolog from Gallus gallus (Chicken).